A 610-amino-acid chain; its full sequence is Zinc metalloproteinase-disintegrin-like acurhagin (610 aa).

A signal peptide spans 1-20 (MIQVLLVTICLAAFPYQGSS). The propeptide occupies 21–191 (IILESGDVND…ISQLNLIPEQ (171 aa)). Q192 is subject to Pyrrolidone carboxylic acid. The Peptidase M12B domain occupies 198–394 (KYVETVVVVD…HNPECIDNEP (197 aa)). Residues E201 and D285 each coordinate Ca(2+). Disulfide bonds link C309–C389, C349–C373, and C351–C356. H334 lines the Zn(2+) pocket. E335 is a catalytic residue. Zn(2+) is bound by residues H338 and H344. Residue N372 is glycosylated (N-linked (GlcNAc...) asparagine). 7 residues coordinate Ca(2+): C389, N392, N407, L409, E411, E414, and D417. The Disintegrin domain maps to 402–488 (PPLCGNELLE…ECPADVFHKN (87 aa)). Intrachain disulfides connect C405–C434, C416–C429, C418–C424, C428–C451, C442–C448, C447–C473, C460–C480, C467–C499, C492–C504, C511–C561, C526–C572, C539–C549, C556–C598, and C592–C603. The short motif at 466–468 (ECD) is the D/ECD-tripeptide element. Residues D468, P469, E471, D483, and V484 each contribute to the Ca(2+) site.

This sequence belongs to the venom metalloproteinase (M12B) family. P-III subfamily. P-IIIa sub-subfamily. As to quaternary structure, monomer. Zn(2+) is required as a cofactor. N-glycosylated. Expressed by the venom gland.

It is found in the secreted. With respect to regulation, the proteinase activity is slightly enhanced by Ca(2+) and Mg(2+), but is completely inhibited by Zn(2+). Is completely inhibited by phenanthroline and EDTA. Not inhibited by PMSF. Snake venom zinc metalloprotease that causes hemorrhage and dose-dependently inhibits platelet aggregation triggered by collagen. This inhibition is due to its binding to glycoprotein VI (GP6) and collagen. The binding to GP6 results in inhibition of the signaling pathway (decrease of tyrosine phosphorylation of signaling proteins such as Syk, LAT, PI3-K and PLCgamma2). Preferentially cleaves alpha chain (FGA) of fibrinogen, followed by beta chain (FGB). Also degrades the extracellular matrix protein fibronectin (FN1), and cleaves collagen and von Willebrand factor (VWF). This chain is Zinc metalloproteinase-disintegrin-like acurhagin, found in Deinagkistrodon acutus (Hundred-pace snake).